Here is a 416-residue protein sequence, read N- to C-terminus: Exodeoxyribonuclease 7 large subunit (416 aa).

The interval 1-21 (MTEPDSKPKKGRAGRKKAEPV) is disordered.

Belongs to the XseA family. As to quaternary structure, heterooligomer composed of large and small subunits.

Its subcellular location is the cytoplasm. The catalysed reaction is Exonucleolytic cleavage in either 5'- to 3'- or 3'- to 5'-direction to yield nucleoside 5'-phosphates.. Bidirectionally degrades single-stranded DNA into large acid-insoluble oligonucleotides, which are then degraded further into small acid-soluble oligonucleotides. The polypeptide is Exodeoxyribonuclease 7 large subunit (Deinococcus radiodurans (strain ATCC 13939 / DSM 20539 / JCM 16871 / CCUG 27074 / LMG 4051 / NBRC 15346 / NCIMB 9279 / VKM B-1422 / R1)).